A 555-amino-acid polypeptide reads, in one-letter code: Oligo-1,6-glucosidase (555 aa).

Residue Asp199 is the Nucleophile of the active site. Glu255 functions as the Proton donor in the catalytic mechanism.

This sequence belongs to the glycosyl hydrolase 13 family.

It is found in the cytoplasm. It catalyses the reaction Hydrolysis of (1-&gt;6)-alpha-D-glucosidic linkages in some oligosaccharides produced from starch and glycogen by alpha-amylase, and in isomaltose.. This Heyndrickxia coagulans (Weizmannia coagulans) protein is Oligo-1,6-glucosidase (malL).